The sequence spans 312 residues: Ribonuclease Z (312 aa).

Histidine 62, histidine 64, aspartate 66, histidine 67, histidine 144, aspartate 215, and histidine 273 together coordinate Zn(2+). Aspartate 66 functions as the Proton acceptor in the catalytic mechanism.

It belongs to the RNase Z family. As to quaternary structure, homodimer. The cofactor is Zn(2+).

It carries out the reaction Endonucleolytic cleavage of RNA, removing extra 3' nucleotides from tRNA precursor, generating 3' termini of tRNAs. A 3'-hydroxy group is left at the tRNA terminus and a 5'-phosphoryl group is left at the trailer molecule.. Its function is as follows. Zinc phosphodiesterase, which displays some tRNA 3'-processing endonuclease activity. Probably involved in tRNA maturation, by removing a 3'-trailer from precursor tRNA. This Prochlorococcus marinus (strain AS9601) protein is Ribonuclease Z.